A 678-amino-acid polypeptide reads, in one-letter code: NADPH--cytochrome P450 reductase (678 aa).

Residue glycine 2 is modified to N-acetylglycine. Residues 2 to 21 (GDSHVDTGATSTEAVAEEVS) lie on the Lumenal side of the membrane. Residues 22–42 (LFSMTDMILLSVLVGFLTYFF) traverse the membrane as a helical segment. Residues 43–678 (LFRKKKEEIP…KGRYSLDVWS (636 aa)) lie on the Cytoplasmic side of the membrane. Serine 63 carries the phosphoserine modification. Residues 80-224 (IIVFYGSQTG…DFITWREQFW (145 aa)) enclose the Flavodoxin-like domain. FMN-binding positions include 86-91 (SQTGTA), 138-141 (ATYG), 173-182 (LGNKTYEHFN), and aspartate 208. The FAD-binding FR-type domain maps to 279-521 (KNPFLAAVTT…FVRKSQFRLP (243 aa)). Arginine 298 provides a ligand contact to NADP(+). FAD is bound by residues arginine 424, 454–457 (RYYS), 472–474 (CAV), tyrosine 478, and 488–491 (GVAT). NADP(+) contacts are provided by residues threonine 535, 596-597 (SR), 602-606 (KVYVQ), and aspartate 639. Position 677 (tryptophan 677) interacts with FAD.

Belongs to the NADPH--cytochrome P450 reductase family. The protein in the N-terminal section; belongs to the flavodoxin family. It in the C-terminal section; belongs to the flavoprotein pyridine nucleotide cytochrome reductase family. It depends on FAD as a cofactor. The cofactor is FMN.

Its subcellular location is the endoplasmic reticulum membrane. The catalysed reaction is 2 oxidized [cytochrome P450] + NADPH = 2 reduced [cytochrome P450] + NADP(+) + H(+). Functionally, this enzyme is required for electron transfer from NADP to cytochrome P450 in microsomes. It can also provide electron transfer to heme oxygenase and cytochrome B5. The protein is NADPH--cytochrome P450 reductase of Cavia porcellus (Guinea pig).